The sequence spans 269 residues: Ribonuclease HII (269 aa).

Residues 83-269 (YLIAGVDEVG…HRMSFLTNIL (187 aa)) enclose the RNase H type-2 domain. 3 residues coordinate a divalent metal cation: Asp89, Glu90, and Asp185.

It belongs to the RNase HII family. It depends on Mn(2+) as a cofactor. Mg(2+) serves as cofactor.

The protein resides in the cytoplasm. The catalysed reaction is Endonucleolytic cleavage to 5'-phosphomonoester.. Functionally, endonuclease that specifically degrades the RNA of RNA-DNA hybrids. This is Ribonuclease HII from Clostridium botulinum (strain Hall / ATCC 3502 / NCTC 13319 / Type A).